The following is a 495-amino-acid chain: Cytochrome P450 2E1 (495 aa).

298-303 (FAGTET) is a binding site for substrate. C437 contributes to the heme binding site.

Belongs to the cytochrome P450 family. Interacts with chaperones HSP70 and HSP90; this interaction is required for initial targeting to mitochondria. Heme is required as a cofactor.

It is found in the endoplasmic reticulum membrane. Its subcellular location is the microsome membrane. The protein localises to the mitochondrion inner membrane. The catalysed reaction is an organic molecule + reduced [NADPH--hemoprotein reductase] + O2 = an alcohol + oxidized [NADPH--hemoprotein reductase] + H2O + H(+). It catalyses the reaction (5Z,8Z,11Z)-eicosatrienoate + reduced [NADPH--hemoprotein reductase] + O2 = 19-hydroxy-(5Z,8Z,11Z)-eicosatrienoate + oxidized [NADPH--hemoprotein reductase] + H2O + H(+). It carries out the reaction (5Z,8Z,11Z,14Z,17Z)-eicosapentaenoate + reduced [NADPH--hemoprotein reductase] + O2 = 19-hydroxy-(5Z,8Z,11Z,14Z,17Z)-eicosapentaenoate + oxidized [NADPH--hemoprotein reductase] + H2O + H(+). The enzyme catalyses (4Z,7Z,10Z,13Z,16Z,19Z)-docosahexaenoate + reduced [NADPH--hemoprotein reductase] + O2 = 21-hydroxy-(4Z,7Z,10Z,13Z,16Z,19Z)-docosahexaenoate + oxidized [NADPH--hemoprotein reductase] + H2O + H(+). The catalysed reaction is dodecanoate + reduced [NADPH--hemoprotein reductase] + O2 = 11-hydroxydodecanoate + oxidized [NADPH--hemoprotein reductase] + H2O + H(+). It catalyses the reaction tetradecanoate + reduced [NADPH--hemoprotein reductase] + O2 = 13-hydroxytetradecanoate + oxidized [NADPH--hemoprotein reductase] + H2O + H(+). It carries out the reaction 4-nitrophenol + NADPH + O2 + H(+) = 4-nitrocatechol + NADP(+) + H2O. Its pathway is lipid metabolism; fatty acid metabolism. With respect to regulation, the omega-1 hydroxylase activity is stimulated by cytochrome b5. In terms of biological role, a cytochrome P450 monooxygenase involved in the metabolism of fatty acids. Mechanistically, uses molecular oxygen inserting one oxygen atom into a substrate, and reducing the second into a water molecule, with two electrons provided by NADPH via cytochrome P450 reductase (NADPH--hemoprotein reductase). Catalyzes the hydroxylation of carbon-hydrogen bonds. Hydroxylates fatty acids specifically at the omega-1 position displaying the highest catalytic activity for saturated fatty acids. May be involved in the oxidative metabolism of xenobiotics. This Bos taurus (Bovine) protein is Cytochrome P450 2E1 (CYP2E1).